Consider the following 178-residue polypeptide: Large ribosomal subunit protein uL6 (178 aa).

This sequence belongs to the universal ribosomal protein uL6 family. As to quaternary structure, part of the 50S ribosomal subunit.

This protein binds to the 23S rRNA, and is important in its secondary structure. It is located near the subunit interface in the base of the L7/L12 stalk, and near the tRNA binding site of the peptidyltransferase center. The polypeptide is Large ribosomal subunit protein uL6 (Streptococcus equi subsp. zooepidemicus (strain H70)).